The primary structure comprises 1644 residues: MAARRGRRDRVAPPPTGGPGPDPGGGVRGGSWASRSQAPYGTGGSVSAAEQVHEEGNDSSFVSLSRLGPSLREKDLEMEELILQDETLLETMQSYMDASLISLIEDFGESRLSLEDQNEMSLLTALTEILDNADSENLSPFDTIPDSELLVSPRESSSLHKLLNLSRTPPERDLITPIDPLGPSTGSSRVSGVEVPLADSPWDFSPPPFLETSSPKLPSWRPSRPRPRWGQSPPPQQRSDGEEEEEVAGFSGQMLAGKLDNSVNNVLDFPMHLACPEEEGTAEGADAPASAPGDESISSLSELVRAMHPYCLPNLTHLASLEGELEGQADADADELTLPEGCVVLEIVGQAATTGDDLEIPVVVRQIPSGSQSVLLDESLGSSPALQLLMPTMESETEAAVPEVAPCPDEELPLSSACLLEPREIMESLTPKEPQSLPASASQGSQKVPRKGRKKKNKEQPTACVEACTRRLRSSSRGQSTVSAEVNSQAGSSQKQPQEELQREAAALQSRGKPRAWARAWAAALEKTGSENLERSAGQDSPAEEDALDLCPKLLETSQANPTLSLNDSAQADSMPVDSVEGDSPAVGNAAPGDQASSGTELVGSLPVGPNLTSPVLADKKGIEPAVAIPTSDNLSPADVLANTVAADPVPNDPAPADPVLVKCRPTDPRRAAAAAAAAAQGSRPSLQSADHPKVVSPEGKDVVGPLKVEGSTSATTQEAKPRPLSLSEYRQRRQQRQTEAEDRNSQPPVVGKWPSLPETPTELADIPCLVPSAPARKTAPQRSPIAVPETVSVGSNPVSPTPEPSASKLMVSTHSEQVSSHEMPLAVRPPPPPLPSVSPAGPIPSTVPAPLPPFPPSVPPLLPLPSGGHGVPRLPPPPLQPPGLPVSMRQMPPDPYTQYAPVPPWSCYPSVSPPGYSCLPPPPTMPIVSGTPGTYAVPPTCNVPWVPPPAPVSPYSSSCAYGSLGWGPGLQQPPFWSTVSPPPLSSVPTGRAVPPTPVEPSGDPAGPPEDVLPGPVTPSLSSGPASPAAPPVEPTKPEAQPVPVSPQPKHKVSTLVQSPQIKAPPTLSTEGVVFEESVSERLKSETQENRPKEKPISTAIKSVPVPKQSAVAKLPAVHPARLRKLSFLPTPRAQGPEDVVQAFISEIGIEASDLSSLLEQFEKSEAKKECPLPASADSLAVGNSGIDIPQEKKPLDRLQAPELANVAGLTPPATPPHQLWKPLAAVSLLAKAKSPKSTAQEGTLKPEGITEAKPPATACLQEGAHSPSPVHVGSGDHDYCVRSRTPPKRMPALVISEVGSRWNVKRHQDITIKPVLSLGSAAPPLPCTATSQEPLDHRTSVEQADPSAPCFAPSTLLSPEASPCRSEMNARTPPEPSDKQQSMRCYRKACRSVSPSSRGWQGRRGRSSRSVSSGSSRTSEASSSSSVSSSSRSRSRSRSRSFSPPNKRWRRSSCSSSGRSRRCSSSSSSSSSSSSCSSRSRSPSVSPCRRSDRRRRYSSYRANDHYQRQRVLQKERAIEERRVVFIGKIPGRMTRSELKQRFSVFGEIEECTIHFRVQGDNYGFVTYRYAEEAFAAIESGHKLRQADEQPFDLCFGGRRQFCKRSYSDLDSNREDFDPAPVKSKFDSLDFDTLLKQAQKNLRR.

Disordered stretches follow at residues 1–61, 170–249, 429–616, 646–761, 773–884, 978–1074, and 1322–1507; these read MAAR…DSSF, PERD…EVAG, LTPK…TSPV, AADP…PETP, SAPA…QPPG, STVS…EGVV, and AAPP…NDHY. A compositionally biased stretch (pro residues) spans 12-22; the sequence is APPPTGGPGPD. The segment covering 213–222 has biased composition (low complexity); the sequence is SSPKLPSWRP. S232 is subject to Phosphoserine. Residues 425–460 form a necessary for interaction with CREB1 and NRF1 and for transcriptional coactivation region; sequence IMESLTPKEPQSLPASASQGSQKVPRKGRKKKNKEQ. Over residues 437–446 the composition is skewed to polar residues; it reads LPASASQGSQ. Over residues 448-457 the composition is skewed to basic residues; the sequence is VPRKGRKKKN. Residues 475–496 show a composition bias toward polar residues; that stretch reads SSRGQSTVSAEVNSQAGSSQKQ. The span at 515-524 shows a compositional bias: low complexity; that stretch reads RAWARAWAAA. S541 carries the phosphoserine modification. The segment covering 556–572 has biased composition (polar residues); the sequence is ETSQANPTLSLNDSAQA. Over residues 691–702 the composition is skewed to basic and acidic residues; the sequence is DHPKVVSPEGKD. A compositionally biased stretch (polar residues) spans 811 to 821; the sequence is MVSTHSEQVSS. Composition is skewed to pro residues over residues 828 to 864 and 874 to 884; these read VRPP…PLLP and RLPPPPLQPPG. Phosphoserine is present on residues S1059, S1393, and S1395. The interval 1361-1432 is necessary for interaction with CREB1 and NRF1; it reads EASPCRSEMN…SSSSSVSSSS (72 aa). Composition is skewed to low complexity over residues 1409–1433 and 1453–1489; these read SRSV…SSSR and SSCS…VSPC. One can recognise an RRM domain in the interval 1523-1599; it reads RVVFIGKIPG…QPFDLCFGGR (77 aa).

As to quaternary structure, interacts with CREB1 and NRF1. As to expression, expressed in liver, heart, skeletal muscle, kidney and white and brown adipose tissues.

The protein resides in the nucleus. Its function is as follows. Acts as a coactivator during transcriptional activation of nuclear genes related to mitochondrial biogenesis and cell growth. Involved in the transcription coactivation of CREB and NRF1 target genes. This is Peroxisome proliferator-activated receptor gamma coactivator-related protein 1 (Pprc1) from Mus musculus (Mouse).